The primary structure comprises 341 residues: Thromboxane A2 receptor (341 aa).

Residues 1 to 29 lie on the Extracellular side of the membrane; the sequence is MWLNSTSLGACFRPVNITLQERRAIASPW. N-linked (GlcNAc...) asparagine glycans are attached at residues asparagine 4 and asparagine 16. Residues 30 to 52 form a helical membrane-spanning segment; sequence FAASFCALGLGSNLLALSVLAGA. Topologically, residues 53 to 65 are cytoplasmic; it reads RPGAGPRSSFLAL. The helical transmembrane segment at 66–86 threads the bilayer; it reads LCGLVLTDFLGLLVTGAVVAS. The Extracellular portion of the chain corresponds to 87–105; it reads QHAALLDWRATDPGCRLCH. Cysteine 104 and cysteine 181 are joined by a disulfide. Residues 106–127 traverse the membrane as a helical segment; the sequence is FMGAAMVFFGLCPLLLGAAMAA. Topologically, residues 128–147 are cytoplasmic; it reads ERFVGITRPFSRPAATSRRA. Residues 148-170 form a helical membrane-spanning segment; that stretch reads WATVGLVWVGAGTLGLLPLLGLG. The Extracellular segment spans residues 171–191; it reads RYSVQYPGSWCFLTLGAERGD. The helical transmembrane segment at 192–217 threads the bilayer; it reads VAFGLMFALLGSVSVGLSLLLNTVSV. Topologically, residues 218–244 are cytoplasmic; that stretch reads ATLCRVYHAREATQRPRDCEVEMMVQL. The chain crosses the membrane as a helical span at residues 245 to 268; that stretch reads VGIMVVATVCWMPLLVFILQTLLQ. Residues 269-287 are Extracellular-facing; the sequence is TLPVMSPSGQLLRTTERQL. A helical membrane pass occupies residues 288 to 309; that stretch reads LIYLRVATWNQILDPWVYILFR. Residues 310 to 341 lie on the Cytoplasmic side of the membrane; the sequence is RSVLRRLHPRFTSQLQAVSLHSPPTQAMLSGP. Position 328 is a phosphoserine (serine 328).

This sequence belongs to the G-protein coupled receptor 1 family. Interacts with RPGRIP1L. Interacts with RACK1; the interaction regulates TBXA2R cell surface expression. In the brain, expressed in all types of glial cells. In the kidney, expressed in the mesangial cells of the glomerulus, smooth muscle cells of the renal arterioles, and in transitional cell epithelium of renal pelvis.

Its subcellular location is the cell membrane. In terms of biological role, receptor for thromboxane A2 (TXA2), a potent stimulator of platelet aggregation. The activity of this receptor is mediated by a G-protein that activates a phosphatidylinositol-calcium second messenger system. In the kidney, the binding of TXA2 to glomerular TP receptors causes intense vasoconstriction. Activates phospholipase C and adenylyl cyclase. The chain is Thromboxane A2 receptor (Tbxa2r) from Rattus norvegicus (Rat).